The following is a 264-amino-acid chain: Diphthine synthase (264 aa).

Residues L9, D84, V87, 112–113 (SI), L164, A207, and H232 contribute to the S-adenosyl-L-methionine site.

Belongs to the diphthine synthase family. In terms of assembly, homodimer.

The enzyme catalyses 2-[(3S)-amino-3-carboxypropyl]-L-histidyl-[translation elongation factor 2] + 3 S-adenosyl-L-methionine = diphthine-[translation elongation factor 2] + 3 S-adenosyl-L-homocysteine + 3 H(+). Its pathway is protein modification; peptidyl-diphthamide biosynthesis. Its function is as follows. S-adenosyl-L-methionine-dependent methyltransferase that catalyzes the trimethylation of the amino group of the modified target histidine residue in translation elongation factor 2 (EF-2), to form an intermediate called diphthine. The three successive methylation reactions represent the second step of diphthamide biosynthesis. This chain is Diphthine synthase, found in Methanothermobacter thermautotrophicus (strain ATCC 29096 / DSM 1053 / JCM 10044 / NBRC 100330 / Delta H) (Methanobacterium thermoautotrophicum).